Consider the following 188-residue polypeptide: Inosine triphosphate pyrophosphatase (188 aa).

12–17 (TGNANK) lines the ITP pocket. Glu-40 provides a ligand contact to Mg(2+). ITP is bound by residues Lys-52, 68 to 69 (DT), Lys-85, 144 to 147 (FGWD), Lys-165, and 170 to 171 (HR).

The protein belongs to the HAM1 NTPase family. Homodimer. Mg(2+) serves as cofactor. Requires Mn(2+) as cofactor.

The protein localises to the cytoplasm. The protein resides in the nucleus. It catalyses the reaction ITP + H2O = IMP + diphosphate + H(+). The enzyme catalyses dITP + H2O = dIMP + diphosphate + H(+). The catalysed reaction is XTP + H2O = XMP + diphosphate + H(+). Pyrophosphatase that hydrolyzes non-canonical purine nucleotides such as inosine triphosphate (ITP), deoxyinosine triphosphate (dITP) or xanthosine 5'-triphosphate (XTP) to their respective monophosphate derivatives. The enzyme does not distinguish between the deoxy- and ribose forms. Probably excludes non-canonical purines from RNA and DNA precursor pools, thus preventing their incorporation into RNA and DNA and avoiding chromosomal lesions. This Podospora anserina (strain S / ATCC MYA-4624 / DSM 980 / FGSC 10383) (Pleurage anserina) protein is Inosine triphosphate pyrophosphatase.